A 1065-amino-acid chain; its full sequence is Carbamoyl phosphate synthase large chain (1065 aa).

Positions 1–401 (MPKRTDIETI…AMLKAVRSLE (401 aa)) are carboxyphosphate synthetic domain. The ATP site is built by Arg129, Arg169, Gly175, Gly176, Lys208, Ile210, Glu215, Gly241, Ile242, His243, Gln284, and Glu298. The 195-residue stretch at 133 to 327 (RNLMYELGAP…IAKLAAKIAV (195 aa)) folds into the ATP-grasp 1 domain. Mg(2+) contacts are provided by Gln284, Glu298, and Asn300. The Mn(2+) site is built by Gln284, Glu298, and Asn300. The segment at 402–546 (TGQVHLELKH…YGTYEEENES (145 aa)) is oligomerization domain. The carbamoyl phosphate synthetic domain stretch occupies residues 547–929 (IKSEKPSVVV…ALYKGLVAAG (383 aa)). The 191-residue stretch at 671–861 (EQALRDLNIP…MANIATKAIL (191 aa)) folds into the ATP-grasp 2 domain. Arg707, Arg746, Leu748, Glu752, Gly777, Val778, His779, Ser780, Gln820, and Glu832 together coordinate ATP. The Mg(2+) site is built by Gln820, Glu832, and Asn834. Mn(2+) contacts are provided by Gln820, Glu832, and Asn834. One can recognise an MGS-like domain in the interval 930–1065 (MEIRTEGTVL…EEMPKAEVVH (136 aa)). Residues 930 to 1065 (MEIRTEGTVL…EEMPKAEVVH (136 aa)) form an allosteric domain region.

It belongs to the CarB family. As to quaternary structure, composed of two chains; the small (or glutamine) chain promotes the hydrolysis of glutamine to ammonia, which is used by the large (or ammonia) chain to synthesize carbamoyl phosphate. Tetramer of heterodimers (alpha,beta)4. Mg(2+) is required as a cofactor. Requires Mn(2+) as cofactor.

It catalyses the reaction hydrogencarbonate + L-glutamine + 2 ATP + H2O = carbamoyl phosphate + L-glutamate + 2 ADP + phosphate + 2 H(+). It carries out the reaction hydrogencarbonate + NH4(+) + 2 ATP = carbamoyl phosphate + 2 ADP + phosphate + 2 H(+). Its pathway is amino-acid biosynthesis; L-arginine biosynthesis; carbamoyl phosphate from bicarbonate: step 1/1. The protein operates within pyrimidine metabolism; UMP biosynthesis via de novo pathway; (S)-dihydroorotate from bicarbonate: step 1/3. Functionally, large subunit of the glutamine-dependent carbamoyl phosphate synthetase (CPSase). CPSase catalyzes the formation of carbamoyl phosphate from the ammonia moiety of glutamine, carbonate, and phosphate donated by ATP, constituting the first step of 2 biosynthetic pathways, one leading to arginine and/or urea and the other to pyrimidine nucleotides. The large subunit (synthetase) binds the substrates ammonia (free or transferred from glutamine from the small subunit), hydrogencarbonate and ATP and carries out an ATP-coupled ligase reaction, activating hydrogencarbonate by forming carboxy phosphate which reacts with ammonia to form carbamoyl phosphate. The polypeptide is Carbamoyl phosphate synthase large chain (Lysinibacillus sphaericus (strain C3-41)).